A 305-amino-acid polypeptide reads, in one-letter code: Phosphatidylglycerol--prolipoprotein diacylglyceryl transferase (305 aa).

Transmembrane regions (helical) follow at residues 10-30 (FLISFTLFGLPIVVRWYGAII), 59-79 (LMLGLVLGIAGARIYYVAFEW), and 92-112 (LTTGGIAIHGAIIGALLSTVI). A 1,2-diacyl-sn-glycero-3-phospho-(1'-sn-glycerol) is bound at residue R140. The next 2 helical transmembrane spans lie at 182 to 202 (LFHPTFLYESVWNLVGVGILL) and 260 to 280 (IRVAQLVSMVAIVVCGVLIFL).

It belongs to the Lgt family.

It is found in the cell membrane. It carries out the reaction L-cysteinyl-[prolipoprotein] + a 1,2-diacyl-sn-glycero-3-phospho-(1'-sn-glycerol) = an S-1,2-diacyl-sn-glyceryl-L-cysteinyl-[prolipoprotein] + sn-glycerol 1-phosphate + H(+). It participates in protein modification; lipoprotein biosynthesis (diacylglyceryl transfer). Functionally, catalyzes the transfer of the diacylglyceryl group from phosphatidylglycerol to the sulfhydryl group of the N-terminal cysteine of a prolipoprotein, the first step in the formation of mature lipoproteins. In Chloroflexus aggregans (strain MD-66 / DSM 9485), this protein is Phosphatidylglycerol--prolipoprotein diacylglyceryl transferase.